Here is a 485-residue protein sequence, read N- to C-terminus: Glutamyl-tRNA(Gln) amidotransferase subunit A (485 aa).

Residues lysine 79 and serine 154 each act as charge relay system in the active site. Residue serine 178 is the Acyl-ester intermediate of the active site.

It belongs to the amidase family. GatA subfamily. As to quaternary structure, heterotrimer of A, B and C subunits.

It carries out the reaction L-glutamyl-tRNA(Gln) + L-glutamine + ATP + H2O = L-glutaminyl-tRNA(Gln) + L-glutamate + ADP + phosphate + H(+). Allows the formation of correctly charged Gln-tRNA(Gln) through the transamidation of misacylated Glu-tRNA(Gln) in organisms which lack glutaminyl-tRNA synthetase. The reaction takes place in the presence of glutamine and ATP through an activated gamma-phospho-Glu-tRNA(Gln). In Persephonella marina (strain DSM 14350 / EX-H1), this protein is Glutamyl-tRNA(Gln) amidotransferase subunit A.